We begin with the raw amino-acid sequence, 225 residues long: Tryptophan synthase beta chain (225 aa).

The protein belongs to the TrpB family. Tetramer of two alpha and two beta chains. Requires pyridoxal 5'-phosphate as cofactor.

It catalyses the reaction (1S,2R)-1-C-(indol-3-yl)glycerol 3-phosphate + L-serine = D-glyceraldehyde 3-phosphate + L-tryptophan + H2O. The protein operates within amino-acid biosynthesis; L-tryptophan biosynthesis; L-tryptophan from chorismate: step 5/5. In terms of biological role, the beta subunit is responsible for the synthesis of L-tryptophan from indole and L-serine. In Buchnera aphidicola subsp. Rhopalosiphum padi, this protein is Tryptophan synthase beta chain (trpB).